Here is a 1185-residue protein sequence, read N- to C-terminus: Zinc finger SWIM domain-containing protein 5 (1185 aa).

Over residues methionine 1 to leucine 10 the composition is skewed to basic and acidic residues. Disordered regions lie at residues methionine 1 to glycine 45 and alanine 123 to proline 153. The segment at tyrosine 219 to isoleucine 256 adopts an SWIM-type zinc-finger fold.

The protein is Zinc finger SWIM domain-containing protein 5 (ZSWIM5) of Homo sapiens (Human).